The sequence spans 566 residues: Type 3 secretion system secretin (566 aa).

Residues 1–22 (MKKFNIKSLTLLIVLLPLIVNA) form the signal peptide.

This sequence belongs to the bacterial secretin family. T3SS SctC subfamily. The core secretion machinery of the T3SS is composed of approximately 20 different proteins, including cytoplasmic components, a base, an export apparatus and a needle. This subunit is part of the base, which anchors the injectisome in the bacterial cell envelope. Forms a stable homooligomeric complex.

The protein resides in the cell outer membrane. Component of the type III secretion system (T3SS), also called injectisome, which is used to inject bacterial effector proteins into eukaryotic host cells. Forms a ring-shaped multimeric structure with an apparent central pore in the outer membrane. This Shigella sonnei protein is Type 3 secretion system secretin.